The primary structure comprises 364 residues: Dual-specificity RNA methyltransferase RlmN (364 aa).

Residue glutamate 91 is the Proton acceptor of the active site. The Radical SAM core domain maps to 102–337 (GTLRITQCLS…AIIRKSKGQD (236 aa)). Residues cysteine 109 and cysteine 342 are joined by a disulfide bond. Residues cysteine 116, cysteine 120, and cysteine 123 each contribute to the [4Fe-4S] cluster site. S-adenosyl-L-methionine contacts are provided by residues 169-170 (GE), serine 201, 223-225 (SLH), and asparagine 299. Cysteine 342 (S-methylcysteine intermediate) is an active-site residue.

This sequence belongs to the radical SAM superfamily. RlmN family. The cofactor is [4Fe-4S] cluster.

The protein localises to the cytoplasm. It catalyses the reaction adenosine(2503) in 23S rRNA + 2 reduced [2Fe-2S]-[ferredoxin] + 2 S-adenosyl-L-methionine = 2-methyladenosine(2503) in 23S rRNA + 5'-deoxyadenosine + L-methionine + 2 oxidized [2Fe-2S]-[ferredoxin] + S-adenosyl-L-homocysteine. The enzyme catalyses adenosine(37) in tRNA + 2 reduced [2Fe-2S]-[ferredoxin] + 2 S-adenosyl-L-methionine = 2-methyladenosine(37) in tRNA + 5'-deoxyadenosine + L-methionine + 2 oxidized [2Fe-2S]-[ferredoxin] + S-adenosyl-L-homocysteine. Functionally, specifically methylates position 2 of adenine 2503 in 23S rRNA and position 2 of adenine 37 in tRNAs. m2A2503 modification seems to play a crucial role in the proofreading step occurring at the peptidyl transferase center and thus would serve to optimize ribosomal fidelity. This chain is Dual-specificity RNA methyltransferase RlmN, found in Nitratidesulfovibrio vulgaris (strain ATCC 29579 / DSM 644 / CCUG 34227 / NCIMB 8303 / VKM B-1760 / Hildenborough) (Desulfovibrio vulgaris).